Here is a 430-residue protein sequence, read N- to C-terminus: Mucorpepsin (430 aa).

The N-terminal stretch at 1 to 22 is a signal peptide; the sequence is MLFSQITSAILLTAASLSLTTA. Residues 23–69 constitute a propeptide, activation peptide; the sequence is RPVSKQSESKDKLLALPLTSVSRKFSQTKFGQQQLAEKLAGLKPFSE. In terms of domain architecture, Peptidase A1 spans 89-421; sequence YAIPVSIGTP…DFGNNRIGFA (333 aa). Aspartate 107 is a catalytic residue. Cysteines 120 and 126 form a disulfide. Asparagine 148 and asparagine 257 each carry an N-linked (GlcNAc...) asparagine glycan. Aspartate 306 is an active-site residue. The cysteines at positions 341 and 385 are disulfide-linked.

Belongs to the peptidase A1 family.

It catalyses the reaction Hydrolysis of proteins, favoring hydrophobic residues at P1 and P1'. Clots milk. Does not accept Lys at P1, and hence does not activate trypsinogen.. Functionally, this enzyme, capable of clotting milk is frequently used for cheese production. The protein is Mucorpepsin of Rhizomucor miehei.